The chain runs to 90 residues: DNA-binding protein HU-alpha (90 aa).

It belongs to the bacterial histone-like protein family. In terms of assembly, heterodimer of an alpha and a beta chain.

Functionally, histone-like DNA-binding protein which is capable of wrapping DNA to stabilize it, and thus to prevent its denaturation under extreme environmental conditions. The protein is DNA-binding protein HU-alpha (hupA) of Aeromonas hydrophila.